The sequence spans 168 residues: SsrA-binding protein (168 aa).

The disordered stretch occupies residues 1-20 (MAAQSKQAKPSGKQGGKKII).

Belongs to the SmpB family.

Its subcellular location is the cytoplasm. Its function is as follows. Required for rescue of stalled ribosomes mediated by trans-translation. Binds to transfer-messenger RNA (tmRNA), required for stable association of tmRNA with ribosomes. tmRNA and SmpB together mimic tRNA shape, replacing the anticodon stem-loop with SmpB. tmRNA is encoded by the ssrA gene; the 2 termini fold to resemble tRNA(Ala) and it encodes a 'tag peptide', a short internal open reading frame. During trans-translation Ala-aminoacylated tmRNA acts like a tRNA, entering the A-site of stalled ribosomes, displacing the stalled mRNA. The ribosome then switches to translate the ORF on the tmRNA; the nascent peptide is terminated with the 'tag peptide' encoded by the tmRNA and targeted for degradation. The ribosome is freed to recommence translation, which seems to be the essential function of trans-translation. This chain is SsrA-binding protein, found in Mycobacterium ulcerans (strain Agy99).